Consider the following 150-residue polypeptide: 6,7-dimethyl-8-ribityllumazine synthase (150 aa).

5-amino-6-(D-ribitylamino)uracil contacts are provided by residues Phe-11, 43–45 (VYD), and 67–69 (AVI). (2S)-2-hydroxy-3-oxobutyl phosphate is bound at residue 72 to 73 (AT). Residue His-75 is the Proton donor of the active site. Residue Leu-100 participates in 5-amino-6-(D-ribitylamino)uracil binding. Arg-115 contacts (2S)-2-hydroxy-3-oxobutyl phosphate.

It belongs to the DMRL synthase family.

The catalysed reaction is (2S)-2-hydroxy-3-oxobutyl phosphate + 5-amino-6-(D-ribitylamino)uracil = 6,7-dimethyl-8-(1-D-ribityl)lumazine + phosphate + 2 H2O + H(+). It functions in the pathway cofactor biosynthesis; riboflavin biosynthesis; riboflavin from 2-hydroxy-3-oxobutyl phosphate and 5-amino-6-(D-ribitylamino)uracil: step 1/2. Functionally, catalyzes the formation of 6,7-dimethyl-8-ribityllumazine by condensation of 5-amino-6-(D-ribitylamino)uracil with 3,4-dihydroxy-2-butanone 4-phosphate. This is the penultimate step in the biosynthesis of riboflavin. The protein is 6,7-dimethyl-8-ribityllumazine synthase of Pyrobaculum aerophilum (strain ATCC 51768 / DSM 7523 / JCM 9630 / CIP 104966 / NBRC 100827 / IM2).